Here is a 396-residue protein sequence, read N- to C-terminus: Tryptophan synthase beta chain (396 aa).

K88 carries the post-translational modification N6-(pyridoxal phosphate)lysine.

It belongs to the TrpB family. Tetramer of two alpha and two beta chains. The cofactor is pyridoxal 5'-phosphate.

It carries out the reaction (1S,2R)-1-C-(indol-3-yl)glycerol 3-phosphate + L-serine = D-glyceraldehyde 3-phosphate + L-tryptophan + H2O. It functions in the pathway amino-acid biosynthesis; L-tryptophan biosynthesis; L-tryptophan from chorismate: step 5/5. The beta subunit is responsible for the synthesis of L-tryptophan from indole and L-serine. This is Tryptophan synthase beta chain from Shewanella baltica (strain OS185).